Reading from the N-terminus, the 218-residue chain is Histone H1.1 (218 aa).

The disordered stretch occupies residues 1–42 (MSEVALPAPAASTSPEKPSAGKKAKKPAKAAAAAKKKPAGPS). Ser2 is modified (N-acetylserine). Phosphoserine occurs at positions 2 and 12. Lys17 is modified (N6-acetyllysine). The segment covering 20–38 (AGKKAKKPAKAAAAAKKKP) has biased composition (basic residues). N6-(beta-hydroxybutyryl)lysine is present on Lys37. The H15 domain occupies 39-112 (AGPSVSELIV…GASGSFKLNK (74 aa)). Phosphoserine is present on Ser44. Lys55 carries the post-translational modification N6-(beta-hydroxybutyryl)lysine. At Arg57 the chain carries Citrulline. Lys67 carries the N6-(beta-hydroxybutyryl)lysine modification. Lys78 bears the N6-acetyllysine mark. Lys88 carries the N6-(beta-hydroxybutyryl)lysine modification. Lys93 carries the N6-(beta-hydroxybutyryl)lysine; alternate modification. At Lys93 the chain carries N6-acetyllysine; alternate. Residue Ser107 is modified to Phosphoserine; by PKC. Lys109 carries the N6-(beta-hydroxybutyryl)lysine modification. Residues 116-218 (SVDAKPTATK…KPKKAAPKKK (103 aa)) form a disordered region. Residues 119-149 (AKPTATKVATKTKVTSASKKPKKASGAAAAK) are compositionally biased toward low complexity. The residue at position 125 (Lys125) is an N6-acetyllysine. 2 stretches are compositionally biased toward basic residues: residues 150–183 (KSVK…KKVA) and 190–218 (KAVK…PKKK). Thr206 bears the Phosphothreonine mark.

Belongs to the histone H1/H5 family. In terms of assembly, interacts with DFFB. Post-translationally, H1 histones are progressively phosphorylated during the cell cycle, becoming maximally phosphorylated during late G2 phase and M phase, and being dephosphorylated sharply thereafter. In terms of processing, citrullination at Arg-57 (H1R54ci) by PADI4 takes place within the DNA-binding site of H1 and results in its displacement from chromatin and global chromatin decondensation, thereby promoting pluripotency and stem cell maintenance.

The protein localises to the nucleus. It localises to the chromosome. In terms of biological role, H1 histones bind to linker DNA between nucleosomes forming the macromolecular structure known as the chromatin fiber. H1 histones are necessary for the condensation of nucleosome chains into higher-order structured fibers. Also acts as a regulator of individual gene transcription through chromatin remodeling. The chain is Histone H1.1 from Bos taurus (Bovine).